Reading from the N-terminus, the 174-residue chain is MGKITFYEDRGFQGRHYECSTDHSNLQPYFSRCNSVRVDSGCWMLYEQPNFTGCQYFLRRGDYPDYQQWMGFSDSVRSCRLIPHAGSHRIRLYEREDYRGQMVEFTEDCPSLQDRFHFNEIYSLNVLEGCWVLYEMTNYRGRQYLLRPGEYRRYHDWGAMNARVGSLRRVMDFY.

2 consecutive Beta/gamma crystallin 'Greek key' domains span residues 2–40 (GKIT…RVDS) and 41–83 (GCWM…RLIP). The interval 84 to 87 (HAGS) is connecting peptide. Beta/gamma crystallin 'Greek key' domains are found at residues 88-128 (HRIR…NVLE) and 129-171 (GCWV…RRVM).

This sequence belongs to the beta/gamma-crystallin family. In terms of tissue distribution, detected in the superior olivary complex and fibers of the ventral aoustic stria of the auditory hindbrain.

In terms of biological role, crystallins are the dominant structural components of the vertebrate eye lens. This Rattus norvegicus (Rat) protein is Gamma-crystallin D (Crygd).